We begin with the raw amino-acid sequence, 285 residues long: V-type proton ATPase subunit D (285 aa).

Positions 208-226 (QKTKENAEKADSVTKEEHQ) are enriched in basic and acidic residues. A disordered region spans residues 208 to 285 (QKTKENAEKA…ENDSDEEVIF (78 aa)). S219 bears the Phosphoserine mark. Positions 227–236 (GGSNTLQQTK) are enriched in polar residues. Residues 248 to 263 (VGKEVINEVENSKDDT) show a composition bias toward basic and acidic residues. Over residues 271 to 285 (TDDEEENDSDEEVIF) the composition is skewed to acidic residues.

Belongs to the V-ATPase D subunit family. V-ATPase is a heteromultimeric enzyme composed of a peripheral catalytic V1 complex (components A to H) attached to an integral membrane V0 proton pore complex (components: a, c, c', c'', d, e, f and VOA1).

Its subcellular location is the vacuole membrane. Its function is as follows. Subunit of the V1 complex of vacuolar(H+)-ATPase (V-ATPase), a multisubunit enzyme composed of a peripheral complex (V1) that hydrolyzes ATP and a membrane integral complex (V0) that translocates protons. V-ATPase is responsible for acidifying and maintaining the pH of intracellular compartments. The polypeptide is V-type proton ATPase subunit D (vma8) (Schizosaccharomyces pombe (strain 972 / ATCC 24843) (Fission yeast)).